Consider the following 214-residue polypeptide: Urease accessory protein UreG (214 aa).

The disordered stretch occupies residues methionine 1–glycine 20. Glycine 23–threonine 30 provides a ligand contact to GTP.

This sequence belongs to the SIMIBI class G3E GTPase family. UreG subfamily. Homodimer. UreD, UreF and UreG form a complex that acts as a GTP-hydrolysis-dependent molecular chaperone, activating the urease apoprotein by helping to assemble the nickel containing metallocenter of UreC. The UreE protein probably delivers the nickel.

Its subcellular location is the cytoplasm. In terms of biological role, facilitates the functional incorporation of the urease nickel metallocenter. This process requires GTP hydrolysis, probably effectuated by UreG. The chain is Urease accessory protein UreG from Leptothrix cholodnii (strain ATCC 51168 / LMG 8142 / SP-6) (Leptothrix discophora (strain SP-6)).